The chain runs to 347 residues: Quinolinate synthase (347 aa).

H47 and S68 together coordinate iminosuccinate. C113 is a [4Fe-4S] cluster binding site. Residues 139 to 141 (YAN) and S156 each bind iminosuccinate. Residue C200 participates in [4Fe-4S] cluster binding. Iminosuccinate is bound by residues 226 to 228 (HPE) and T243. [4Fe-4S] cluster is bound at residue C297.

This sequence belongs to the quinolinate synthase family. Type 1 subfamily. [4Fe-4S] cluster serves as cofactor.

The protein resides in the cytoplasm. The enzyme catalyses iminosuccinate + dihydroxyacetone phosphate = quinolinate + phosphate + 2 H2O + H(+). It functions in the pathway cofactor biosynthesis; NAD(+) biosynthesis; quinolinate from iminoaspartate: step 1/1. Catalyzes the condensation of iminoaspartate with dihydroxyacetone phosphate to form quinolinate. The polypeptide is Quinolinate synthase (Escherichia fergusonii (strain ATCC 35469 / DSM 13698 / CCUG 18766 / IAM 14443 / JCM 21226 / LMG 7866 / NBRC 102419 / NCTC 12128 / CDC 0568-73)).